The sequence spans 318 residues: MSYPLFDKDEHWHKPEQAFLTDDHRTILRFAVEALMSGKGAVLVTLVEIRGGAARPLGAQMVVREDGRYCGFVSGGCVEAAAAFEALEMMGSGRDREIRYGEGSPWFDIVLPCGGGITLTLHKLRSAQPLLAVLNRLEQRKPVGLRYDPQAQSLVCLPTQTRTGWNLNGFEVGFRPCVRLMIYGRSLEAQATASLAAATGYDSHIFDLFPASASAQIDTDTAVILLCHDLNRELPVLQAAREAKPFYLGALGSYRTHTLRLQKLHELGWSREETTQIRAPVGIFPKARDAHTLALSVLAEVASVRLHQEEDSCLPPSS.

As to quaternary structure, homodimer in solution. Interacts with MocA.

Functionally, chaperone required for the production of an active PaoABC aldehyde oxidoreductase. Stabilizes the PaoC subunit and is required for the insertion of the molybdenum cofactor into this subunit. Binds molybdenum cofactor. Binds the molybdopterin cytosine dinucleotide (MCD) form of the cofactor after its formation by the molybdenum cofactor cytidylyltransferase MocA. This Escherichia coli (strain K12) protein is Molybdenum cofactor insertion chaperone PaoD.